Reading from the N-terminus, the 286-residue chain is Shikimate dehydrogenase (NADP(+)) (286 aa).

Residues 19–21 (SLS) and threonine 66 each bind shikimate. Lysine 70 functions as the Proton acceptor in the catalytic mechanism. Shikimate is bound by residues asparagine 91 and aspartate 107. NADP(+) is bound by residues 129–133 (GSGGA) and leucine 229. A shikimate-binding site is contributed by tyrosine 231. Glycine 252 serves as a coordination point for NADP(+).

The protein belongs to the shikimate dehydrogenase family. As to quaternary structure, homodimer.

The enzyme catalyses shikimate + NADP(+) = 3-dehydroshikimate + NADPH + H(+). It functions in the pathway metabolic intermediate biosynthesis; chorismate biosynthesis; chorismate from D-erythrose 4-phosphate and phosphoenolpyruvate: step 4/7. Involved in the biosynthesis of the chorismate, which leads to the biosynthesis of aromatic amino acids. Catalyzes the reversible NADPH linked reduction of 3-dehydroshikimate (DHSA) to yield shikimate (SA). This Prochlorococcus marinus (strain AS9601) protein is Shikimate dehydrogenase (NADP(+)).